The sequence spans 182 residues: Large ribosomal subunit protein bL25 (182 aa).

It belongs to the bacterial ribosomal protein bL25 family. CTC subfamily. In terms of assembly, part of the 50S ribosomal subunit; part of the 5S rRNA/L5/L18/L25 subcomplex. Contacts the 5S rRNA. Binds to the 5S rRNA independently of L5 and L18.

Its function is as follows. This is one of the proteins that binds to the 5S RNA in the ribosome where it forms part of the central protuberance. In Borrelia hermsii (strain HS1 / DAH), this protein is Large ribosomal subunit protein bL25.